The sequence spans 469 residues: DNA (cytosine-5-)-methyltransferase M.ApeKI (469 aa).

The 466-residue stretch at 4–469 folds into the SAM-dependent MTase C5-type domain; the sequence is YSTISLFSGA…EALAEVLDAV (466 aa). Cysteine 93 is a catalytic residue.

The protein belongs to the class I-like SAM-binding methyltransferase superfamily. C5-methyltransferase family.

It catalyses the reaction a 2'-deoxycytidine in DNA + S-adenosyl-L-methionine = a 5-methyl-2'-deoxycytidine in DNA + S-adenosyl-L-homocysteine + H(+). Cytosine methylase that recognizes the double-stranded sequence 5'-GC(A/T)GC-3', methylates C-5 position of the second cytosine on both strands, and protects the DNA from cleavage by the ApeKI endonuclease. The sequence is that of DNA (cytosine-5-)-methyltransferase M.ApeKI from Aeropyrum pernix (strain ATCC 700893 / DSM 11879 / JCM 9820 / NBRC 100138 / K1).